Here is a 122-residue protein sequence, read N- to C-terminus: Large ribosomal subunit protein uL14 (122 aa).

The protein belongs to the universal ribosomal protein uL14 family. As to quaternary structure, part of the 50S ribosomal subunit. Forms a cluster with proteins L3 and L19. In the 70S ribosome, L14 and L19 interact and together make contacts with the 16S rRNA in bridges B5 and B8.

In terms of biological role, binds to 23S rRNA. Forms part of two intersubunit bridges in the 70S ribosome. This Maricaulis maris (strain MCS10) (Caulobacter maris) protein is Large ribosomal subunit protein uL14.